A 430-amino-acid polypeptide reads, in one-letter code: Mannosylglucosylglycerate synthase (430 aa).

The protein belongs to the glycosyltransferase group 1 family. Requires a divalent metal cation as cofactor.

It carries out the reaction (2R)-2-O-(alpha-D-glucopyranosyl)-glycerate + GDP-alpha-D-mannose = (2R)-2-O-[alpha-D-mannopyranosyl-(1-&gt;2)-alpha-D-glucopyranosyl]-glycerate + GDP + H(+). Involved in the biosynthesis of the compatible solute mannosylglucosylglycerate through a nonphosphorylating pathway. Catalyzes the synthesis of mannosylglucosylglycerate (MGG) from glucosylglycerate (GG) and GDP-mannose. This is Mannosylglucosylglycerate synthase from Petrotoga mobilis (strain DSM 10674 / SJ95).